Consider the following 1551-residue polypeptide: UDP-glucose:glycoprotein glucosyltransferase 1 (1551 aa).

The first 42 residues, 1–42 (MCSRGDANAAGAAAARRVTGLCYNMGLLIALALLCLFSLAEA), serve as a signal peptide directing secretion. 4 N-linked (GlcNAc...) asparagine glycosylation sites follow: Asn-269, Asn-536, Asn-1015, and Asn-1228. The glucosyltransferase stretch occupies residues 1244-1551 (KTEEVKQDKD…QEGSQKHEEL (308 aa)). Residue Ser-1277 is modified to Phosphoserine. Positions 1531 to 1551 (KELGTLHEEETQEGSQKHEEL) are disordered. The Prevents secretion from ER motif lies at 1548 to 1551 (HEEL).

It belongs to the glycosyltransferase 8 family. In terms of assembly, monomer as well as in a tight complex with SELENOF. Interacts with METTL23. Part of a large chaperone multiprotein complex comprising DNAJB11, HSP90B1, HSPA5, HYOU, PDIA2, PDIA4, PDIA6, PPIB, SDF2L1, UGGT1 and very small amounts of ERP29, but not, or at very low levels, CALR nor CANX. The cofactor is Ca(2+).

Its subcellular location is the endoplasmic reticulum lumen. The protein localises to the endoplasmic reticulum-Golgi intermediate compartment. It carries out the reaction N(4)-(alpha-D-Man-(1-&gt;2)-alpha-D-Man-(1-&gt;2)-alpha-D-Man-(1-&gt;3)-[alpha-D-Man-(1-&gt;2)-alpha-D-Man-(1-&gt;3)-[alpha-D-Man-(1-&gt;2)-alpha-D-Man-(1-&gt;6)]-alpha-D-Man-(1-&gt;6)]-beta-D-Man-(1-&gt;4)-beta-D-GlcNAc-(1-&gt;4)-beta-D-GlcNAc)-L-asparaginyl-[protein] (N-glucan mannose isomer 9A1,2,3B1,2,3) + UDP-alpha-D-glucose = N(4)-(alpha-D-Glc-(1-&gt;3)-alpha-D-Man-(1-&gt;2)-alpha-D-Man-(1-&gt;2)-alpha-D-Man-(1-&gt;3)-[alpha-D-Man-(1-&gt;2)-alpha-D-Man-(1-&gt;3)-[alpha-D-Man-(1-&gt;2)-alpha-D-Man-(1-&gt;6)]-alpha-D-Man-(1-&gt;6)]-beta-D-Man-(1-&gt;4)-beta-D-GlcNAc-(1-&gt;4)-beta-D-GlcNAc)-L-asparaginyl-[protein] + UDP + H(+). It functions in the pathway protein modification; protein glycosylation. In terms of biological role, recognizes glycoproteins with minor folding defects. Reglucosylates single N-glycans near the misfolded part of the protein, thus providing quality control for protein folding in the endoplasmic reticulum. Reglucosylated proteins are recognized by calreticulin for recycling to the endoplasmic reticulum and refolding or degradation. In Rattus norvegicus (Rat), this protein is UDP-glucose:glycoprotein glucosyltransferase 1 (Uggt1).